The sequence spans 799 residues: Histidine biosynthesis trifunctional protein (799 aa).

The phosphoribosyl-AMP cyclohydrolase stretch occupies residues 1-229 (MVLPILPLID…FIVEQENVGF (229 aa)). The phosphoribosyl-ATP pyrophosphohydrolase stretch occupies residues 230-312 (CHLETMSCFG…FYFALAKLVT (83 aa)). The interval 313 to 799 (NNVSLKDVEN…KLGLIPKDFQ (487 aa)) is histidinol dehydrogenase. Residues Q618 and H621 each coordinate Zn(2+). Active-site residues include E687 and H688. 2 residues coordinate Zn(2+): D721 and H780.

It in the C-terminal section; belongs to the histidinol dehydrogenase family. Requires Zn(2+) as cofactor.

It catalyses the reaction 1-(5-phospho-beta-D-ribosyl)-5'-AMP + H2O = 1-(5-phospho-beta-D-ribosyl)-5-[(5-phospho-beta-D-ribosylamino)methylideneamino]imidazole-4-carboxamide. The enzyme catalyses 1-(5-phospho-beta-D-ribosyl)-ATP + H2O = 1-(5-phospho-beta-D-ribosyl)-5'-AMP + diphosphate + H(+). It carries out the reaction L-histidinol + 2 NAD(+) + H2O = L-histidine + 2 NADH + 3 H(+). The protein operates within amino-acid biosynthesis; L-histidine biosynthesis; L-histidine from 5-phospho-alpha-D-ribose 1-diphosphate: step 2/9. Its pathway is amino-acid biosynthesis; L-histidine biosynthesis; L-histidine from 5-phospho-alpha-D-ribose 1-diphosphate: step 3/9. It participates in amino-acid biosynthesis; L-histidine biosynthesis; L-histidine from 5-phospho-alpha-D-ribose 1-diphosphate: step 9/9. This Saccharomyces bayanus (Yeast) protein is Histidine biosynthesis trifunctional protein (HIS4).